The following is a 242-amino-acid chain: Biosynthetic peptidoglycan transglycosylase (242 aa).

Residues 19 to 39 (LMVVLAVFWAGGIALFSVAPV) form a helical membrane-spanning segment.

It belongs to the glycosyltransferase 51 family.

It is found in the cell inner membrane. It carries out the reaction [GlcNAc-(1-&gt;4)-Mur2Ac(oyl-L-Ala-gamma-D-Glu-L-Lys-D-Ala-D-Ala)](n)-di-trans,octa-cis-undecaprenyl diphosphate + beta-D-GlcNAc-(1-&gt;4)-Mur2Ac(oyl-L-Ala-gamma-D-Glu-L-Lys-D-Ala-D-Ala)-di-trans,octa-cis-undecaprenyl diphosphate = [GlcNAc-(1-&gt;4)-Mur2Ac(oyl-L-Ala-gamma-D-Glu-L-Lys-D-Ala-D-Ala)](n+1)-di-trans,octa-cis-undecaprenyl diphosphate + di-trans,octa-cis-undecaprenyl diphosphate + H(+). It participates in cell wall biogenesis; peptidoglycan biosynthesis. In terms of biological role, peptidoglycan polymerase that catalyzes glycan chain elongation from lipid-linked precursors. The sequence is that of Biosynthetic peptidoglycan transglycosylase from Shigella boydii serotype 4 (strain Sb227).